Reading from the N-terminus, the 166-residue chain is P2Y purinoceptor 2 (166 aa).

Over 1–24 the chain is Cytoplasmic; it reads VHRCLGVLRPLHSLRWGRARYARR. A helical membrane pass occupies residues 25–45; the sequence is VAAVVWVLVLACQAPVLYFVT. Topologically, residues 46-72 are extracellular; the sequence is TSVRGTRITCHDTSARELFSHFVAYSS. A helical membrane pass occupies residues 73 to 93; sequence VMLSLLFAVPFSVILVCYVLM. Residues 94–115 are Cytoplasmic-facing; that stretch reads ARRLLKPAYGTTGGLPRAKRKS. A helical transmembrane segment spans residues 116-136; that stretch reads VRTIALVLAVFTLCFLPFHVT. Residues 137–159 are Extracellular-facing; it reads RTLYYSFRSLDLSCHTLNAINMA. Residues 160–166 traverse the membrane as a helical segment; it reads YKITRPL.

It belongs to the G-protein coupled receptor 1 family.

Its subcellular location is the cell membrane. Functionally, receptor for ATP and UTP coupled to G-proteins that activate a phosphatidylinositol-calcium second messenger system. This chain is P2Y purinoceptor 2 (P2RY2), found in Cricetulus griseus (Chinese hamster).